A 459-amino-acid polypeptide reads, in one-letter code: Light-independent protochlorophyllide reductase subunit N (459 aa).

The [4Fe-4S] cluster site is built by C22, C47, and C107.

This sequence belongs to the BchN/ChlN family. Protochlorophyllide reductase is composed of three subunits; ChlL, ChlN and ChlB. Forms a heterotetramer of two ChlB and two ChlN subunits. Requires [4Fe-4S] cluster as cofactor.

The protein localises to the plastid. The protein resides in the chloroplast. The enzyme catalyses chlorophyllide a + oxidized 2[4Fe-4S]-[ferredoxin] + 2 ADP + 2 phosphate = protochlorophyllide a + reduced 2[4Fe-4S]-[ferredoxin] + 2 ATP + 2 H2O. The protein operates within porphyrin-containing compound metabolism; chlorophyll biosynthesis (light-independent). Functionally, component of the dark-operative protochlorophyllide reductase (DPOR) that uses Mg-ATP and reduced ferredoxin to reduce ring D of protochlorophyllide (Pchlide) to form chlorophyllide a (Chlide). This reaction is light-independent. The NB-protein (ChlN-ChlB) is the catalytic component of the complex. The sequence is that of Light-independent protochlorophyllide reductase subunit N from Pinus contorta (Shore pine).